The following is a 311-amino-acid chain: Thioredoxin reductase (311 aa).

Residues 15 to 18 (SGPA), 37 to 44 (EGTQFGGA), N53, and V86 contribute to the FAD site. The cysteines at positions 137 and 140 are disulfide-linked. 5 residues coordinate NADP(+): S158, H177, R183, I240, and Y260. FAD-binding positions include D280 and 287 to 290 (RQAI). R287 provides a ligand contact to NADP(+).

This sequence belongs to the class-II pyridine nucleotide-disulfide oxidoreductase family. As to quaternary structure, homodimer. Requires FAD as cofactor.

It localises to the cytoplasm. The enzyme catalyses [thioredoxin]-dithiol + NADP(+) = [thioredoxin]-disulfide + NADPH + H(+). This chain is Thioredoxin reductase, found in Mycolicibacterium smegmatis (Mycobacterium smegmatis).